A 275-amino-acid polypeptide reads, in one-letter code: Peptidoglycan-N-acetylglucosamine deacetylase BC_1960 (275 aa).

The 182-residue stretch at Ala-81–Val-262 folds into the NodB homology domain. Asp-88 (proton acceptor) is an active-site residue. Residues Asp-89, His-139, and His-143 each contribute to the Zn(2+) site. Pro-179 carries the post-translational modification 2-hydroxyproline; partial. The active-site Proton donor is His-233.

Belongs to the polysaccharide deacetylase family. Zn(2+) serves as cofactor. Hydroxylated on Pro-179. Hydroxylation alters the active site and enhances significantly deacetylase activity, probably by creating a more favorable environment for transition-state stabilization. It might be autocatalytic.

It catalyses the reaction peptidoglycan-N-acetyl-D-glucosamine + H2O = peptidoglycan-D-glucosamine + acetate.. Deacetylase activity is stimulated by hydroxylation on Pro-179. Inhibited by CuCl(2) and ZnCl(2). Inhibited by the hydroxamate N-hydroxy-4-(naphthalene-1-yl)benzamide (NHNB). Its function is as follows. Catalyzes the deacetylation of N-acetylglucosamine (GlcNAc) residues in peptidoglycan. Also acts on soluble chitin substrates and N-acetylchitooligomers. Acts on cell wall peptidoglycan from the Gram-positive bacteria B.cereus and B.subtilis and the Gram-negative bacterium H.pylori. Not active on acetylated xylan. The sequence is that of Peptidoglycan-N-acetylglucosamine deacetylase BC_1960 from Bacillus cereus (strain ATCC 14579 / DSM 31 / CCUG 7414 / JCM 2152 / NBRC 15305 / NCIMB 9373 / NCTC 2599 / NRRL B-3711).